The chain runs to 252 residues: Adenosine 5'-phosphosulfate reductase (252 aa).

4 residues coordinate [4Fe-4S] cluster: Cys-125, Cys-126, Cys-208, and Cys-211. Residues 219–252 (DGYSREGRWSDRDKTECGLHTSPEDEDGAHAAES) form a disordered region. Residues 221-235 (YSREGRWSDRDKTEC) are compositionally biased toward basic and acidic residues. Cys-235 acts as the Nucleophile; cysteine thiosulfonate intermediate in catalysis.

This sequence belongs to the PAPS reductase family. CysH subfamily. Requires [4Fe-4S] cluster as cofactor.

Its subcellular location is the cytoplasm. The catalysed reaction is [thioredoxin]-disulfide + sulfite + AMP + 2 H(+) = adenosine 5'-phosphosulfate + [thioredoxin]-dithiol. It functions in the pathway sulfur metabolism; hydrogen sulfide biosynthesis; sulfite from sulfate. Its function is as follows. Catalyzes the formation of sulfite from adenosine 5'-phosphosulfate (APS) using thioredoxin as an electron donor. This is Adenosine 5'-phosphosulfate reductase from Salinibacter ruber (strain DSM 13855 / M31).